A 136-amino-acid polypeptide reads, in one-letter code: Secreted RxLR effector protein 63 (136 aa).

An N-terminal signal peptide occupies residues 1–21 (MQRFPYSLLLLLLSATNRSRR). The RxLR motif lies at 43–46 (RMLR).

It belongs to the RxLR effector family.

It is found in the secreted. Its subcellular location is the host nucleus. In terms of biological role, effector that partially suppresses the tobacco programmed cell death induced by cell death-inducing proteins. The sequence is that of Secreted RxLR effector protein 63 from Plasmopara viticola (Downy mildew of grapevine).